The following is a 409-amino-acid chain: Broad specificity amino-acid racemase (409 aa).

The N-terminal stretch at 1–24 (MPFRRTLLAASLALLITGQAPLYA) is a signal peptide. A disulfide bond links cysteine 71 and cysteine 97. Lysine 75 acts as the Proton acceptor in catalysis. Lysine 75 is modified (N6-(pyridoxal phosphate)lysine). Arginine 174 lines the substrate pocket. Catalysis depends on tyrosine 301, which acts as the Proton acceptor. Position 349 (methionine 349) interacts with substrate.

It belongs to the alanine racemase family. Bsr subfamily. Requires pyridoxal 5'-phosphate as cofactor.

The protein resides in the periplasm. The enzyme catalyses an L-alpha-amino acid = a D-alpha-amino acid. It catalyses the reaction L-lysine = D-lysine. The catalysed reaction is L-arginine = D-arginine. It carries out the reaction L-glutamine = D-glutamine. In terms of biological role, amino-acid racemase able to utilize a broad range of substrates. Reversibly racemizes 9 of the 19 natural chiral amino acids known, including both positively charged amino acids (Lys, Arg and His) and non-beta-branched aliphatic amino acids (Ala, Leu, Met, Ser, Gln and Asn). Among these amino acids, activity is the highest with lysine and arginine, and poor or very poor with the others. Plays a primary role in the catabolism of basic amino acid, that allows P.putida strain KT2440 to grow on L-Lys and L-Arg as the sole source of carbon and nitrogen, through conversion to their respective D-enantiomers. This is Broad specificity amino-acid racemase from Pseudomonas putida (strain ATCC 47054 / DSM 6125 / CFBP 8728 / NCIMB 11950 / KT2440).